The following is a 146-amino-acid chain: Cystatin-C (146 aa).

The first 26 residues, 1–26 (MAGPLRAPLLLLAILAVALAVSPAAG), serve as a signal peptide directing secretion. Serine 43 bears the Phosphoserine; by FAM20C mark. A Secondary area of contact motif is present at residues 81 to 85 (QIVAG). 2 disulfide bridges follow: cysteine 99–cysteine 109 and cysteine 123–cysteine 143.

It belongs to the cystatin family. As to quaternary structure, homodimer. In terms of processing, the Thr-25 variant is O-glycosylated with a core 1 or possibly core 8 glycan. The signal peptide of the O-glycosylated Thr-25 variant is cleaved between Ala-20 and Val-21. Expressed in submandibular and sublingual saliva but not in parotid saliva (at protein level). Expressed in various body fluids, such as the cerebrospinal fluid and plasma. Expressed in highest levels in the epididymis, vas deferens, brain, thymus, and ovary and the lowest in the submandibular gland.

It localises to the secreted. Its function is as follows. As an inhibitor of cysteine proteinases, this protein is thought to serve an important physiological role as a local regulator of this enzyme activity. This chain is Cystatin-C (CST3), found in Homo sapiens (Human).